A 741-amino-acid polypeptide reads, in one-letter code: MEQTYQYAWIIPFLPLPVPMLIGLGLLLFPTATKSLRRMWAFQSVLLLSIVMIFSMNLSIQQINSSSVYQYVWSWIINNDFSLEFGYLIDPLTSIMSILITTVGILVLIYSDNYMSHDHGYLRFFAYMSFFSTSMLGLVTSSNLIQIYIFWELVGMCSYLLIGFWFTRPVAAKACQKAFVTNRVGDFGLLLGILGFYWITGSFEFRDLFQIFNNLISTNQVNFLFVTLCAVLLFAGAIAKSAQFPLHVWLPDAMEGPTPISALIHAATMVAAGIFLVARLLPLFIVIPHIMNFISLIGIITVFLGATLALAQKDINRGLAYSTMSQLGYMMLALGMGSYRSALFHLITHAYSKALLFLGSGSVIHSMETLVGYCPKKSQNMVLMGGLTKHVPITKNSFLLGTLSLCGIPPLACFWSKDEILNDSWLYSPIFAIIAWSTAGLTAFYMCRIYLLTFEGHLNVHFQNYSGKRNTPLYSISLWGKEGSKISNKNFRLVTLLKMNKTGRPSFFSNRVYKIDENVRNMTPPFLSIPNFGNIKTSLYPYESDNTMLFPILILFIFTLFVGFLGIPLNQDVDILTKWLTPSINLLHKNSNNSIDWYEFCKDALFSVSIASFGIFIAFFLYKPVYSSFQNLDLINSFFKMGPRRNFYDKIKNAIYDWSYNRGYIDAFYGTFFIVGTRKLAEFTHFFDRRIIDGIPNGVGLISFFVAEVIKSVGGGRISSYLFFYFSYVSIFLVIYYFLNL.

The next 16 helical transmembrane spans lie at 9 to 29 (WIIP…LLLF), 40 to 60 (WAFQ…NLSI), 89 to 109 (IDPL…LVLI), 125 to 145 (FAYM…SNLI), 147 to 167 (IYIF…FWFT), 185 to 205 (GDFG…SFEF), 219 to 239 (NQVN…GAIA), 258 to 278 (TPIS…FLVA), 289 to 311 (HIMN…LALA), 327 to 347 (LGYM…FHLI), 354 to 374 (ALLF…VGYC), 396 to 416 (NSFL…CFWS), 425 to 445 (WLYS…TAFY), 549 to 569 (LFPI…GIPL), 605 to 625 (LFSV…YKPV), and 721 to 741 (YLFF…FLNL).

This sequence belongs to the complex I subunit 5 family. As to quaternary structure, NDH is composed of at least 16 different subunits, 5 of which are encoded in the nucleus.

It localises to the plastid. The protein localises to the chloroplast thylakoid membrane. The catalysed reaction is a plastoquinone + NADH + (n+1) H(+)(in) = a plastoquinol + NAD(+) + n H(+)(out). The enzyme catalyses a plastoquinone + NADPH + (n+1) H(+)(in) = a plastoquinol + NADP(+) + n H(+)(out). Functionally, NDH shuttles electrons from NAD(P)H:plastoquinone, via FMN and iron-sulfur (Fe-S) centers, to quinones in the photosynthetic chain and possibly in a chloroplast respiratory chain. The immediate electron acceptor for the enzyme in this species is believed to be plastoquinone. Couples the redox reaction to proton translocation, and thus conserves the redox energy in a proton gradient. The protein is NAD(P)H-quinone oxidoreductase subunit 5, chloroplastic (ndhF) of Symphyotrichum cordifolium (Heart-leaved aster).